A 215-amino-acid chain; its full sequence is Large ribosomal subunit protein bL25 (215 aa).

The disordered stretch occupies residues 160–215 (GDLPLPEGSELVTEPEETVMSVVAPETEEEPDTEEDEEGEEDVEEESEEEEEESEE). Acidic residues predominate over residues 185 to 215 (ETEEEPDTEEDEEGEEDVEEESEEEEEESEE).

This sequence belongs to the bacterial ribosomal protein bL25 family. CTC subfamily. In terms of assembly, part of the 50S ribosomal subunit; part of the 5S rRNA/L5/L18/L25 subcomplex. Contacts the 5S rRNA. Binds to the 5S rRNA independently of L5 and L18.

Functionally, this is one of the proteins that binds to the 5S RNA in the ribosome where it forms part of the central protuberance. This Natranaerobius thermophilus (strain ATCC BAA-1301 / DSM 18059 / JW/NM-WN-LF) protein is Large ribosomal subunit protein bL25.